Consider the following 90-residue polypeptide: Mu-theraphotoxin-Phlo1b (90 aa).

The N-terminal stretch at 1-22 (MKVSVLITLAVLGVMFVWTSAA) is a signal peptide. Positions 23 to 50 (EQEDHGSDRRDSPALLKSLGRVFQSEER) are excised as a propeptide. Intrachain disulfides connect Cys-52-Cys-66, Cys-59-Cys-71, and Cys-65-Cys-79. The residue at position 85 (Phe-85) is a Phenylalanine amide. A propeptide spanning residues 86 to 90 (GNEKS) is cleaved from the precursor.

The protein belongs to the neurotoxin 10 (Hwtx-1) family. 39 (Jztx-34) subfamily. Expressed by the venom gland.

It is found in the secreted. In terms of biological role, gating-modifier toxin that inhibits voltage-gated sodium channel Nav by shifting the threshold for channel activation to more positive potentials. This toxin moderately inhibits human Nav1.7/SCN9A (IC(50)=360 nM) and weakly inhibits hNav1.2/SCN2A (37% inhibition at 1 uM peptide) and hNav1.5/SCN5A (&lt;20% inhibition at 1 uM peptide). Inhibition of Nav1.7 is voltage-dependent, with lower inhibition at more positive test pulses. This is Mu-theraphotoxin-Phlo1b from Phlogius sp. (Tarantula spider).